A 345-amino-acid polypeptide reads, in one-letter code: NADPH dehydrogenase (345 aa).

23–26 (SPMC) contacts FMN. Y28 is a binding site for substrate. The FMN site is built by A60 and Q102. 164–167 (HGAH) serves as a coordination point for substrate. FMN is bound by residues R215 and 307 to 308 (GR).

Belongs to the NADH:flavin oxidoreductase/NADH oxidase family. NamA subfamily. As to quaternary structure, homotetramer. FMN serves as cofactor.

The enzyme catalyses A + NADPH + H(+) = AH2 + NADP(+). Functionally, catalyzes the reduction of the double bond of an array of alpha,beta-unsaturated aldehydes and ketones. It also reduces the nitro group of nitroester and nitroaromatic compounds. It could have a role in detoxification processes. This Bacillus cereus (strain Q1) protein is NADPH dehydrogenase.